Consider the following 213-residue polypeptide: RPW8-like protein 3 (213 aa).

The region spanning 1–153 (MPVSEIMAGA…ITRQPTDCIC (153 aa)) is the RPW8 domain. The chain crosses the membrane as a helical span at residues 7–23 (MAGAALGLALQVLHDAI). Coiled-coil stretches lie at residues 70–93 (EDLK…RRRN) and 125–147 (VDIK…ITRQ). Asn-157 is a glycosylation site (N-linked (GlcNAc...) asparagine).

This sequence belongs to the plant RPW8 protein family.

It localises to the membrane. Its function is as follows. Probable disease resistance (R) protein. This Arabidopsis thaliana (Mouse-ear cress) protein is RPW8-like protein 3.